The sequence spans 431 residues: Beta-1,4-glucuronyltransferase 1 (431 aa).

The Cytoplasmic segment spans residues 1–11; it reads MHFSKKCSVFK. The chain crosses the membrane as a helical span at residues 12 to 32; it reads VVLSALLIVALLQLLYLSFLS. Topologically, residues 33-431 are lumenal; that stretch reads KLHGKQQRYK…AKYPTSPRRC (399 aa). The N-linked (GlcNAc...) asparagine glycan is linked to Asn216. Mn(2+)-binding residues include Asp241 and Asp243. Residue Asn314 is glycosylated (N-linked (GlcNAc...) asparagine).

It belongs to the glycosyltransferase 49 family. Mn(2+) serves as cofactor.

It is found in the golgi apparatus membrane. It carries out the reaction 3-O-[beta-D-Xyl-(1-&gt;4)-Rib-ol-P-Rib-ol-P-3-beta-D-GalNAc-(1-&gt;3)-beta-D-GlcNAc-(1-&gt;4)-(O-6-P-alpha-D-Man)]-Thr-[protein] + UDP-alpha-D-glucuronate = 3-O-[beta-D-GlcA-(1-&gt;3)-beta-D-Xyl-(1-&gt;4)-Rib-ol-P-Rib-ol-P-3-beta-D-GalNAc-(1-&gt;3)-beta-D-GlcNAc-(1-&gt;4)-(O-6-P-alpha-D-Man)]-Thr-[protein] + UDP + H(+). The protein operates within protein modification; protein glycosylation. Beta-1,4-glucuronyltransferase involved in O-mannosylation of alpha-dystroglycan (DAG1). Transfers a glucuronic acid (GlcA) residue onto a xylose (Xyl) acceptor to produce the glucuronyl-beta-1,4-xylose-beta disaccharide primer, which is further elongated by LARGE, during synthesis of phosphorylated O-mannosyl glycan. Phosphorylated O-mannosyl glycan is a carbohydrate structure present in alpha-dystroglycan (DAG1), which is required for binding laminin G-like domain-containing extracellular proteins with high affinity. Required for axon guidance; via its function in O-mannosylation of alpha-dystroglycan (DAG1). The chain is Beta-1,4-glucuronyltransferase 1 from Danio rerio (Zebrafish).